The chain runs to 248 residues: Ribosomal RNA small subunit methyltransferase J (248 aa).

S-adenosyl-L-methionine is bound by residues 98–99 (RD), 114–115 (ER), 150–151 (SS), and D168.

It belongs to the methyltransferase superfamily. RsmJ family.

The protein resides in the cytoplasm. It catalyses the reaction guanosine(1516) in 16S rRNA + S-adenosyl-L-methionine = N(2)-methylguanosine(1516) in 16S rRNA + S-adenosyl-L-homocysteine + H(+). Specifically methylates the guanosine in position 1516 of 16S rRNA. The polypeptide is Ribosomal RNA small subunit methyltransferase J (Shewanella baltica (strain OS185)).